Reading from the N-terminus, the 494-residue chain is UPF0371 protein SPH_0451 (494 aa).

This sequence belongs to the UPF0371 family.

The protein is UPF0371 protein SPH_0451 of Streptococcus pneumoniae (strain Hungary19A-6).